A 192-amino-acid polypeptide reads, in one-letter code: Ion-translocating oxidoreductase complex subunit B (192 aa).

The hydrophobic stretch occupies residues 1-26 (MSTIWIAIAALSALALAFGLVLGYAS). The 60-residue stretch at 32 to 91 (ENDPIVEEVEAMLPQSQCGQCGYPGCRPYAEAVALNGENINKCGPGGEAMMLKLAEKLNV) folds into the 4Fe-4S domain. Residues Cys-49, Cys-52, Cys-57, Cys-74, Cys-117, Cys-120, Cys-123, Cys-127, Cys-147, Cys-150, Cys-153, and Cys-157 each contribute to the [4Fe-4S] cluster site. 2 consecutive 4Fe-4S ferredoxin-type domains span residues 108–137 (QVAWIDESNCIGCTKCIQACPVDAIIGSTK) and 138–167 (AVHTVVSDLCTGCDLCVAPCPTDCIELRPI).

This sequence belongs to the 4Fe4S bacterial-type ferredoxin family. RnfB subfamily. In terms of assembly, the complex is composed of six subunits: RnfA, RnfB, RnfC, RnfD, RnfE and RnfG. It depends on [4Fe-4S] cluster as a cofactor.

Its subcellular location is the cell inner membrane. Part of a membrane-bound complex that couples electron transfer with translocation of ions across the membrane. The chain is Ion-translocating oxidoreductase complex subunit B from Pectobacterium carotovorum subsp. carotovorum (strain PC1).